Consider the following 475-residue polypeptide: Tryptophan synthase beta chain 2, chloroplastic (475 aa).

The span at 1–21 (MATASTAATFRPSSVSASSEL) shows a compositional bias: polar residues. The interval 1–44 (MATASTAATFRPSSVSASSELTHLRSPSKLPKFTPLPSARSRSS) is disordered. Residues 1–51 (MATASTAATFRPSSVSASSELTHLRSPSKLPKFTPLPSARSRSSSSFSVSC) constitute a chloroplast transit peptide. Thr52 is modified (N-acetylthreonine). Lys170 carries the post-translational modification N6-(pyridoxal phosphate)lysine.

The protein belongs to the TrpB family. In terms of assembly, tetramer of two alpha and two beta chains. The cofactor is pyridoxal 5'-phosphate.

The protein resides in the plastid. The protein localises to the chloroplast. It catalyses the reaction (1S,2R)-1-C-(indol-3-yl)glycerol 3-phosphate + L-serine = D-glyceraldehyde 3-phosphate + L-tryptophan + H2O. It participates in amino-acid biosynthesis; L-tryptophan biosynthesis; L-tryptophan from chorismate: step 5/5. In terms of biological role, the beta subunit is responsible for the synthesis of L-tryptophan from indole and L-serine. The protein is Tryptophan synthase beta chain 2, chloroplastic (TSB2) of Arabidopsis thaliana (Mouse-ear cress).